The chain runs to 357 residues: Non-structural protein NS2 (357 aa).

2 disordered regions span residues asparagine 163–methionine 199 and leucine 228–histidine 267. 2 stretches are compositionally biased toward acidic residues: residues glutamate 230 to aspartate 241 and aspartate 250 to aspartate 260.

It belongs to the orbivirus non-structural protein NS2 family.

In terms of biological role, single-stranded RNA-binding protein. The chain is Non-structural protein NS2 (Segment-8) from Antilocapra americana (Pronghorn).